We begin with the raw amino-acid sequence, 456 residues long: tRNA modification GTPase MnmE (456 aa).

Residues Arg-25, Glu-82, and Lys-121 each contribute to the (6S)-5-formyl-5,6,7,8-tetrahydrofolate site. A TrmE-type G domain is found at 217 to 379 (GMKVVIAGRP…LKAHLKSVMG (163 aa)). Position 227 (Asn-227) interacts with K(+). GTP-binding positions include 227 to 232 (NAGKSS), 246 to 252 (TNIAGTT), and 271 to 274 (DTAG). Residue Ser-231 participates in Mg(2+) binding. The K(+) site is built by Thr-246, Ile-248, and Thr-251. Thr-252 is a Mg(2+) binding site. Lys-456 contacts (6S)-5-formyl-5,6,7,8-tetrahydrofolate.

Belongs to the TRAFAC class TrmE-Era-EngA-EngB-Septin-like GTPase superfamily. TrmE GTPase family. In terms of assembly, homodimer. Heterotetramer of two MnmE and two MnmG subunits. K(+) serves as cofactor.

It localises to the cytoplasm. Exhibits a very high intrinsic GTPase hydrolysis rate. Involved in the addition of a carboxymethylaminomethyl (cmnm) group at the wobble position (U34) of certain tRNAs, forming tRNA-cmnm(5)s(2)U34. This Saccharophagus degradans (strain 2-40 / ATCC 43961 / DSM 17024) protein is tRNA modification GTPase MnmE.